We begin with the raw amino-acid sequence, 444 residues long: Homogentisate 1,2-dioxygenase (444 aa).

His-298 functions as the Proton acceptor in the catalytic mechanism. 2 residues coordinate Fe cation: His-341 and Glu-347. Positions 356 and 377 each coordinate homogentisate. His-377 lines the Fe cation pocket.

Belongs to the homogentisate dioxygenase family. In terms of assembly, hexamer; dimer of trimers. The cofactor is Fe cation.

The catalysed reaction is homogentisate + O2 = 4-maleylacetoacetate + H(+). Its pathway is amino-acid degradation; L-phenylalanine degradation; acetoacetate and fumarate from L-phenylalanine: step 4/6. Its function is as follows. Involved in the catabolism of homogentisate (2,5-dihydroxyphenylacetate or 2,5-OH-PhAc), a central intermediate in the degradation of phenylalanine and tyrosine. Catalyzes the oxidative ring cleavage of the aromatic ring of homogentisate to yield maleylacetoacetate. The protein is Homogentisate 1,2-dioxygenase of Burkholderia ambifaria (strain ATCC BAA-244 / DSM 16087 / CCUG 44356 / LMG 19182 / AMMD) (Burkholderia cepacia (strain AMMD)).